The chain runs to 258 residues: Putative cysteine-rich repeat secretory protein 16 (258 aa).

The N-terminal stretch at 1 to 30 is a signal peptide; sequence MYYSSPTCFVLITIFAVVVTQLIFMRTVSS. Gnk2-homologous domains follow at residues 37–139 and 144–247; these read YLNH…PFDT and DKDN…LYPF.

It belongs to the cysteine-rich repeat secretory protein family.

It localises to the secreted. This is Putative cysteine-rich repeat secretory protein 16 (CRRSP16) from Arabidopsis thaliana (Mouse-ear cress).